Consider the following 1381-residue polypeptide: MKAPAVLAPGILMLLFTLVQRSNGECKEALAKSEMNVNMKYQLPNFTAETPIQNVILHEHHIFLGATNYIYVLNEEDLQKVAEYKTGPVLEHPDCFPCQDCSSKANLSGGVWKDNINMALVVDTYYDDQLISCGSVNRGTCQRHVFPHNHTADIQSEVHCIFSPQIEEPSQCPDCVVSALGAKVLSSVKDRFINFFVGNTINSSYFPHHPLHSISVRRLKETKDGFMFLTDQSYIDVLPEFRDSYPIKYVHAFESNNFIYFLTVQRETLNAQTFHTRIIRFCSLNSGLHSYMEMPLECILTEKRKKRSTKKEVFNILQAAYVSKPGAQLARQIGASLNDDILFGVFAQSKPDSAEPMDRSAMCAFPIKYVNDFFNKIVNKNNVRCLQHFYGPNHEHCFNRTLLRNSSGCEARRDEYRAEFTTALQRVDLFMGQFSEVLLTSISTFVKGDLTIANLGTSEGRFMQVVVSRSGPSTPHVNFLLDSHPVSPEVIVEHPLNQNGYTLVVTGKKITKIPLNGLGCRHFQSCSQCLSAPPFVQCGWCHDKCVRSEECPSGTWTQQICLPAIYKVFPTSAPLEGGTRLTICGWDFGFRRNNKFDLKKTRVLLGNESCTLTLSESTMNTLKCTVGPAMNKHFNMSIIISNDHGTTQYSTFSYVDPIITSISPKYGPMAGGTLLTLTGNYLNSGNSRHISIGGKTCTLKSVSNSVLECYTPAQTISTEFAVKLKIDLANRETSIFSYREDPIVYEIHPTKSFISGGSTITGVGKNLHSVSIPRMVINVHEAGRNFTVACQHRSNSEIICCTTPSLQQLNLQLPLKTKAFFMLDGILSKYFDLIYVHNPVFKPFEKPVMISMGNENVLEIKGNDIDPEAVKGEVLKVGNKSCENIHLHSEAVLCTVPNDLLKLNSELNIEWKQAISSTVLGKVIVQPDQNFTGLIAGVVSISIALLLLLGLFLWLKKRKQIKDLGSELVRYDARVHTPHLDRLVSARSVSPTTEMVSNESVDYRATFPEDQFPNSSQNGSCRQVQYPLTDMSPILTSGDSDISSPLLQNTVHIDLSVLNPELVQAVQHVVIGPSSLIVHFNEVIGRGHFGCVYHGTLLDNDGKKIHCAVKSLNRITDIGEVSQFLTEGIIMKDFSHPNVLSLLGICLRSEGSPLVVLPYMKHGDLRNFIRNETHNPTVKDLIGFGLQVAKGMKYLASKKFVHRDLAARNCMLDEKFTVKVADFGLARDMYDKEYYSVHNKTGAKLPVKWMALESLQTQKFTTKSDVWSFGVLLWELMTRGAPPYPDVNTFDITVYLLQGRRLLQPEYCPDPLYEVMLKCWHPKAEMRPSFSELVSRISAIFSTFIGEHYVHVNATYVNVKCVAPYPSLLSSEDNADDEVDT.

A signal peptide spans Met-1 to Gly-24. The Extracellular segment spans residues Glu-25–Thr-932. Residues Lys-27–Leu-515 enclose the Sema domain. An N-linked (GlcNAc...) asparagine glycan is attached at Asn-45. 4 cysteine pairs are disulfide-bonded: Cys-95–Cys-101, Cys-98–Cys-160, Cys-133–Cys-141, and Cys-172–Cys-175. An N-linked (GlcNAc...) asparagine glycan is attached at Asn-106. Asn-149 carries N-linked (GlcNAc...) asparagine glycosylation. An N-linked (GlcNAc...) asparagine glycan is attached at Asn-202. 2 disulfide bridges follow: Cys-298–Cys-363 and Cys-385–Cys-397. Residues Asn-399 and Asn-405 are each glycosylated (N-linked (GlcNAc...) asparagine). Cystine bridges form between Cys-520/Cys-538, Cys-526/Cys-561, Cys-529/Cys-545, and Cys-541/Cys-551. 3 consecutive IPT/TIG domains span residues Pro-563–Val-655, Pro-657–Arg-739, and Pro-742–Val-836. Thr-582 carries O-linked (Man) threonine glycosylation. N-linked (GlcNAc...) asparagine glycosylation is found at Asn-607 and Asn-635. O-linked (Man) threonine glycosylation is found at Thr-676 and Thr-761. N-linked (GlcNAc...) asparagine glycans are attached at residues Asn-785, Asn-879, and Asn-930. A helical membrane pass occupies residues Gly-933 to Leu-955. At Lys-956–Thr-1381 the chain is on the cytoplasmic side. Ser-966 bears the Phosphoserine mark. At Thr-977 the chain carries Phosphothreonine. A phosphoserine mark is found at Ser-990, Ser-997, and Ser-1000. Tyr-1003 is subject to Phosphotyrosine. A Protein kinase domain is found at Val-1078 to Ile-1345. ATP contacts are provided by residues Ile-1084–Val-1092 and Lys-1110. Catalysis depends on Asp-1204, which acts as the Proton acceptor. Residues Leu-1212 to Thr-1381 form an interaction with RANBP9 region. Tyr-1230 is subject to Phosphotyrosine. A phosphotyrosine; by autocatalysis mark is found at Tyr-1234 and Tyr-1235. Thr-1289 is subject to Phosphothreonine. Positions Trp-1320–Val-1359 are interaction with MUC20. Phosphotyrosine; by autocatalysis occurs at positions 1349 and 1356. The residue at position 1365 (Tyr-1365) is a Phosphotyrosine.

The protein belongs to the protein kinase superfamily. Tyr protein kinase family. In terms of assembly, heterodimer made of an alpha chain (50 kDa) and a beta chain (145 kDa) which are disulfide linked. Binds PLXNB1. Interacts when phosphorylated with downstream effectors including STAT3, PIK3R1, SRC, PCLG1, GRB2 and GAB1. Interacts with SPSB1, SPSB2 and SPSB4. Interacts with INPP5D/SHIP1. When phosphorylated at Tyr-1356, interacts with INPPL1/SHIP2. Interacts with RANBP9 and RANBP10, as well as SPSB1, SPSB2, SPSB3 and SPSB4. SPSB1 binding occurs in the presence and in the absence of HGF, however HGF treatment has a positive effect on this interaction. Interacts with MUC20; prevents interaction with GRB2 and suppresses hepatocyte growth factor-induced cell proliferation. Interacts with GRB10. Interacts with PTPN1 and PTPN2. Interacts with HSP90AA1 and HSP90AB1; the interaction suppresses MET kinase activity. Interacts with tensin TNS3. Interacts (when phosphorylated) with tensin TNS4 (via SH2 domain); the interaction increases MET protein stability by inhibiting MET endocytosis and subsequent lysosomal degradation. (Microbial infection) Immunoprecipitates with L.monocytogenes InlB. InlB probably dimerizes upon binding to MET, which encourages subsequent dimerization of MET. Autophosphorylated in response to ligand binding on Tyr-1234 and Tyr-1235 in the kinase domain leading to further phosphorylation of Tyr-1349 and Tyr-1356 in the C-terminal multifunctional docking site. Dephosphorylated by PTPRJ at Tyr-1349 and Tyr-1365. Dephosphorylated by PTPN1 and PTPN2. Post-translationally, ubiquitinated. Ubiquitination by CBL regulates the receptor stability and activity through proteasomal degradation. In terms of processing, O-mannosylation of IPT/TIG domains by TMEM260 is required for protein maturation. O-mannosylated residues are composed of single mannose glycans that are not elongated or modified. (Microbial infection) Tyrosine phosphorylation is stimulated by L.monocytogenes InlB.

It localises to the membrane. It catalyses the reaction L-tyrosyl-[protein] + ATP = O-phospho-L-tyrosyl-[protein] + ADP + H(+). In its inactive state, the C-terminal tail interacts with the catalytic domain and inhibits the kinase activity. Upon ligand binding, the C-terminal tail is displaced and becomes phosphorylated, thus increasing the kinase activity. In terms of biological role, receptor tyrosine kinase that transduces signals from the extracellular matrix into the cytoplasm by binding to hepatocyte growth factor/HGF ligand. Regulates many physiological processes including proliferation, scattering, morphogenesis and survival. Ligand binding at the cell surface induces autophosphorylation of MET on its intracellular domain that provides docking sites for downstream signaling molecules. Following activation by ligand, interacts with the PI3-kinase subunit PIK3R1, PLCG1, SRC, GRB2, STAT3 or the adapter GAB1. Recruitment of these downstream effectors by MET leads to the activation of several signaling cascades including the RAS-ERK, PI3 kinase-AKT, or PLCgamma-PKC. The RAS-ERK activation is associated with the morphogenetic effects while PI3K/AKT coordinates prosurvival effects. During embryonic development, MET signaling plays a role in gastrulation, development and migration of muscles and neuronal precursors, angiogenesis and kidney formation. In adults, participates in wound healing as well as organ regeneration and tissue remodeling. Also promotes differentiation and proliferation of hematopoietic cells. Its function is as follows. (Microbial infection) Acts as a receptor for Listeria monocytogenes internalin InlB, mediating entry of the pathogen into cells. The protein is Hepatocyte growth factor receptor (MET) of Chlorocebus aethiops (Green monkey).